Here is a 717-residue protein sequence, read N- to C-terminus: Eukaryotic translation initiation factor 3 subunit B (717 aa).

The interval 1–89 (MTVEDNLDID…VFIEYETGEM (89 aa)) is sufficient for interaction with HCR1 and TIF32. A sufficient for interaction with PIC8 region spans residues 1–216 (MTVEDNLDID…GVQLWGGPDW (216 aa)). The 88-residue stretch at 28–115 (SFIVVDGAPV…HKLLVNKLSE (88 aa)) folds into the RRM domain. WD repeat units follow at residues 183-221 (RERW…PPIC), 223-284 (FQHP…PVRT), 293-332 (GASM…LLDK), 445-484 (ELKD…NRHT), 506-549 (FDKK…DRKH), and 564-609 (SEHY…QREE).

The protein belongs to the eIF-3 subunit B family. Component of the eukaryotic translation initiation factor 3 (eIF-3) complex.

The protein resides in the cytoplasm. In terms of biological role, RNA-binding component of the eukaryotic translation initiation factor 3 (eIF-3) complex, which is involved in protein synthesis of a specialized repertoire of mRNAs and, together with other initiation factors, stimulates binding of mRNA and methionyl-tRNAi to the 40S ribosome. The eIF-3 complex specifically targets and initiates translation of a subset of mRNAs involved in cell proliferation. In Yarrowia lipolytica (strain CLIB 122 / E 150) (Yeast), this protein is Eukaryotic translation initiation factor 3 subunit B.